A 62-amino-acid polypeptide reads, in one-letter code: Large ribosomal subunit protein bL28 (62 aa).

Residues 1–28 (MARVCTITGRKARSGNSRSHAMNATKRK) are disordered.

It belongs to the bacterial ribosomal protein bL28 family.

This chain is Large ribosomal subunit protein bL28, found in Bacillus anthracis (strain CDC 684 / NRRL 3495).